The sequence spans 422 residues: Keratin, type I cytoskeletal 23 (422 aa).

Positions 1–24 (MNSSHSFNQTYSASVHSLGSTRGR) are enriched in polar residues. The disordered stretch occupies residues 1–35 (MNSSHSFNQTYSASVHSLGSTRGRQGSCHRAPSVH). The segment at 1-71 (MNSSHSFNQT…GRSSPLLGGN (71 aa)) is head. Residues 72-107 (GKATMQNLNDRLATYLEKVRALEEANSKLETRILRW) form a coil 1A region. Positions 72–382 (GKATMQNLND…RLLEGDTEGT (311 aa)) constitute an IF rod domain. A linker 1 region spans residues 108–125 (HQEREPSHRKDYSQYEEN). Residues 126–217 (ISRLQEQIVD…KRHEQEMEEN (92 aa)) are coil 1B. The linker 12 stretch occupies residues 218-240 (HLPSDFKVSVKVDTTPGEDLIKV). Residues 241–378 (LEDMRQEYEL…ATYRRLLEGD (138 aa)) are coil 2. Residues 379 to 422 (TEGTMDGSESRLKGSEASTIKAITQESVNGRIVLSQVNEIQKHI) form a rod-like helical tail region.

It belongs to the intermediate filament family. As to quaternary structure, heterotetramer of two type I and two type II keratins.

This Mus musculus (Mouse) protein is Keratin, type I cytoskeletal 23 (Krt23).